The sequence spans 78 residues: Omega-conotoxin PnVIA (78 aa).

Positions 1-22 are cleaved as a signal peptide; sequence MKLTCMMIIAVLFLTAWTFVMA. Residues 23 to 45 constitute a propeptide that is removed on maturation; it reads DDPRDEPEARDEMNPAASKLNER. Intrachain disulfides connect cysteine 47–cysteine 65, cysteine 54–cysteine 69, and cysteine 64–cysteine 73. Glutamine 76 carries the post-translational modification Glutamine amide.

As to expression, expressed by the venom duct.

It localises to the secreted. Its function is as follows. Omega-conotoxins act at presynaptic membranes, they bind and block voltage-gated calcium channels (Cav). Acts on high voltage-activated (HVA) calcium currents in molluscan neurons. This is Omega-conotoxin PnVIA from Conus pennaceus (Feathered cone).